The primary structure comprises 365 residues: Zinc finger protein lsy-2 (365 aa).

The interval 1 to 36 (MLTRRNAKQSQRNSADQSLSEFNSSSMTHGSNQSVY) is disordered. Residues 8-36 (KQSQRNSADQSLSEFNSSSMTHGSNQSVY) show a composition bias toward polar residues. 5 C2H2-type zinc fingers span residues 78 to 100 (HQCN…AVIH), 106 to 128 (FRCD…RSVH), 134 to 156 (HACP…LRTH), 264 to 287 (HDCP…TLEH), and 296 to 318 (FFCE…MSYH).

It localises to the nucleus speckle. Functionally, involved in transcriptional regulation. Required to specify left-right asymmetry of the ASE gustatory neurons, probably acting upstream of microRNA lsy-6. Involved in maintaining the distinction between somatic and germ cells, perhaps acting by repressing germ cell-specific genes in somatic cells. The polypeptide is Zinc finger protein lsy-2 (Caenorhabditis elegans).